The chain runs to 150 residues: Large ribosomal subunit protein bL9 (150 aa).

The protein belongs to the bacterial ribosomal protein bL9 family.

In terms of biological role, binds to the 23S rRNA. The protein is Large ribosomal subunit protein bL9 of Paracidovorax citrulli (strain AAC00-1) (Acidovorax citrulli).